The chain runs to 280 residues: Nocamycin O-methyltransferase (280 aa).

It belongs to the methyltransferase superfamily.

The enzyme catalyses nocamycin E + S-adenosyl-L-methionine = nocamycin I + S-adenosyl-L-homocysteine. The protein operates within antibiotic biosynthesis. Involved in the biosynthesis of nocamycin I and nocamycin II. Catalyzes the methylation of nocamycin E to yield nocamycin I. This is Nocamycin O-methyltransferase from Saccharothrix syringae (Nocardiopsis syringae).